A 73-amino-acid polypeptide reads, in one-letter code: Aminopeptidase G (73 aa).

Residues 39 to 73 are disordered; the sequence is GRRAASSSWPGRGSSRRWRPGRRTGAAARGCWRAP. Low complexity-rich tracts occupy residues 42–51 and 61–73; these read AASSSWPGRG and RTGA…WRAP.

Belongs to the peptidase M1 family. Zn(2+) is required as a cofactor.

The protein resides in the cytoplasm. Hydrolyzes preferentially the N-terminal glycine and can also hydrolyze other amino acids which are used by PepN but is unable to hydrolyze basic amino acids. The chain is Aminopeptidase G (pepG) from Streptomyces lividans.